The following is a 357-amino-acid chain: Non-structural protein NS2 (357 aa).

Disordered stretches follow at residues 162 to 199 (QNER…AKEM) and 228 to 268 (LDEK…KTHI). Acidic residues-rich tracts occupy residues 230 to 243 (EKDE…EDEE) and 250 to 260 (DDDEQGEDASD).

The protein belongs to the orbivirus non-structural protein NS2 family.

Single-stranded RNA-binding protein. This chain is Non-structural protein NS2 (Segment-8), found in Antilocapra americana (Pronghorn).